Consider the following 156-residue polypeptide: ATP synthase subunit b (156 aa).

The helical transmembrane segment at 12–32 threads the bilayer; the sequence is VAFLIFVLFCMKYVWPPVITA.

This sequence belongs to the ATPase B chain family. F-type ATPases have 2 components, F(1) - the catalytic core - and F(0) - the membrane proton channel. F(1) has five subunits: alpha(3), beta(3), gamma(1), delta(1), epsilon(1). F(0) has three main subunits: a(1), b(2) and c(10-14). The alpha and beta chains form an alternating ring which encloses part of the gamma chain. F(1) is attached to F(0) by a central stalk formed by the gamma and epsilon chains, while a peripheral stalk is formed by the delta and b chains.

It is found in the cell inner membrane. F(1)F(0) ATP synthase produces ATP from ADP in the presence of a proton or sodium gradient. F-type ATPases consist of two structural domains, F(1) containing the extramembraneous catalytic core and F(0) containing the membrane proton channel, linked together by a central stalk and a peripheral stalk. During catalysis, ATP synthesis in the catalytic domain of F(1) is coupled via a rotary mechanism of the central stalk subunits to proton translocation. In terms of biological role, component of the F(0) channel, it forms part of the peripheral stalk, linking F(1) to F(0). In Pseudomonas putida (strain ATCC 700007 / DSM 6899 / JCM 31910 / BCRC 17059 / LMG 24140 / F1), this protein is ATP synthase subunit b.